The following is a 96-amino-acid chain: Co-chaperonin GroES (96 aa).

It belongs to the GroES chaperonin family. As to quaternary structure, heptamer of 7 subunits arranged in a ring. Interacts with the chaperonin GroEL.

It localises to the cytoplasm. Functionally, together with the chaperonin GroEL, plays an essential role in assisting protein folding. The GroEL-GroES system forms a nano-cage that allows encapsulation of the non-native substrate proteins and provides a physical environment optimized to promote and accelerate protein folding. GroES binds to the apical surface of the GroEL ring, thereby capping the opening of the GroEL channel. The protein is Co-chaperonin GroES of Polynucleobacter asymbioticus (strain DSM 18221 / CIP 109841 / QLW-P1DMWA-1) (Polynucleobacter necessarius subsp. asymbioticus).